The following is an 88-amino-acid chain: MQEVVLSLLVLLAGLPTLDANDPENKNDPFYYDWYSLRVGGLICAGILCALGIIVLMSGKCKCKFRQKPSHRPGEGPPLITPGSAHNC.

A signal peptide (not cleaved) is located at residues 1–20 (MQEVVLSLLVLLAGLPTLDA). Residues 1-38 (MQEVVLSLLVLLAGLPTLDANDPENKNDPFYYDWYSLR) lie on the Extracellular side of the membrane. Residues 39 to 59 (VGGLICAGILCALGIIVLMSG) form a helical membrane-spanning segment. Residues 60–88 (KCKCKFRQKPSHRPGEGPPLITPGSAHNC) lie on the Cytoplasmic side of the membrane. The tract at residues 67–88 (QKPSHRPGEGPPLITPGSAHNC) is disordered.

It belongs to the FXYD family. Regulatory subunit of the sodium/potassium-transporting ATPase which is composed of a catalytic alpha subunit, a non-catalytic beta subunit and an additional regulatory subunit. Interacts with catalytic alpha subunit ATP1A1. Also interacts with non-catalytic beta subunit ATP1B1. Interacts with the ATP1A1-ATP1B1, ATP1A2-ATP1B1 and ATP1A3-ATP1B1 NKA isozymes. In terms of processing, glutathionylated. In terms of tissue distribution, expressed at high levels in heart, skeletal muscle and liver with low levels of expression in breast, brain, lung, stomach and colon. In the gastric gland, mainly expressed in the mucus cells forming the upper part of the gland and is absent from the parietal cells.

It localises to the cell membrane. In terms of biological role, associates with and regulates the activity of the sodium/potassium-transporting ATPase (NKA) which transports Na(+) out of the cell and K(+) into the cell. Reduces glutathionylation of the NKA beta-1 subunit ATP1B1, thus reversing glutathionylation-mediated inhibition of ATP1B1. Induces a hyperpolarization-activated chloride current when expressed in Xenopus oocytes. The polypeptide is FXYD domain-containing ion transport regulator 3 (Fxyd3) (Mus musculus (Mouse)).